The primary structure comprises 64 residues: MGMRMMFTVFLLVVLTTTVVSFPSDSASDGRDDEAKDERSDIYESKRNGRCCHPACGKYYSCGR.

The N-terminal stretch at 1 to 21 (MGMRMMFTVFLLVVLTTTVVS) is a signal peptide. A propeptide spanning residues 22–47 (FPSDSASDGRDDEAKDERSDIYESKR) is cleaved from the precursor. Cystine bridges form between cysteine 51/cysteine 56 and cysteine 52/cysteine 62. Proline 54 carries the post-translational modification 4-hydroxyproline; in CnIK; partial. At cysteine 62 the chain carries Cysteine amide.

It belongs to the conotoxin A superfamily. In terms of tissue distribution, expressed by the venom duct.

It localises to the secreted. Alpha-conotoxins act on postsynaptic membranes, they bind to the nicotinic acetylcholine receptors (nAChR) and thus inhibit them. CnIA and CnIB block muscular nAChR alpha-1/gamma and alpha-1/delta subunits. The protein is Alpha-conotoxin CnIA of Conus consors (Singed cone).